The following is a 282-amino-acid chain: Probable ribosomal RNA small subunit methyltransferase A (282 aa).

6 residues coordinate S-adenosyl-L-methionine: histidine 24, leucine 26, glycine 51, glutamate 72, aspartate 100, and asparagine 115.

Belongs to the class I-like SAM-binding methyltransferase superfamily. rRNA adenine N(6)-methyltransferase family. RsmA subfamily.

The protein localises to the cytoplasm. In terms of biological role, specifically dimethylates two adjacent adenosines in the loop of a conserved hairpin near the 3'-end of 16S rRNA in the 30S particle. May play a critical role in biogenesis of 30S subunits. The sequence is that of Probable ribosomal RNA small subunit methyltransferase A from Halobacterium salinarum (strain ATCC 29341 / DSM 671 / R1).